The primary structure comprises 650 residues: Histone-lysine N-methyltransferase family member SUVH9 (650 aa).

Disordered stretches follow at residues 1–24 (MGSS…KLEP) and 95–129 (PVEE…RSSE). Over residues 7–20 (PLDPSLNPSPSLIP) the composition is skewed to low complexity. A compositionally biased stretch (polar residues) spans 107–118 (YSTSDSSPSVAT). The region spanning 205 to 352 (GSIPGVQVGD…FGVFKYRLER (148 aa)) is the YDG domain. A Pre-SET domain is found at 432–490 (SGCDCVNGCGSGCLCEAKNSGEIAYDYNGTLIRQKPLIHECGSACQCPPSCRNRVTQKG). 9 residues coordinate Zn(2+): Cys-434, Cys-436, Cys-440, Cys-444, Cys-446, Cys-472, Cys-476, Cys-478, and Cys-482. Residues 493–637 (NRLEVFRSLE…PMTELSLDYG (145 aa)) form the SET domain.

This sequence belongs to the class V-like SAM-binding methyltransferase superfamily. Histone-lysine methyltransferase family. Suvar3-9 subfamily. In terms of assembly, component of an RNA-directed DNA methylation (RdDM) complex that contains at least MORC6, MORC1/CRT1, MORC2, SWI3D and SUVH9. Interacts directly with MORC6, MORC2 and MORC1/CRT1. Interacts with SWI3B, SWI3C and SWI3D.

The protein localises to the nucleus. It is found in the chromosome. The protein resides in the centromere. Functionally, histone methyltransferase family member that plays a role in gene silencing. Together with MORC6 and SUVH2, regulates the silencing of some transposable elements (TEs). According to PubMed:19043555, the protein does not bind S-adenosyl-L-methionine and lacks methyltransferase activity. Instead, it may function downstream of DRM2 in RNA-directed DNA methylation, binding to methylated DNA and recruiting DNA-directed RNA polymerase V to chromatin. In Arabidopsis thaliana (Mouse-ear cress), this protein is Histone-lysine N-methyltransferase family member SUVH9 (SUVH9).